The chain runs to 445 residues: Exodeoxyribonuclease 7 large subunit (445 aa).

It belongs to the XseA family. Heterooligomer composed of large and small subunits.

It localises to the cytoplasm. It catalyses the reaction Exonucleolytic cleavage in either 5'- to 3'- or 3'- to 5'-direction to yield nucleoside 5'-phosphates.. Functionally, bidirectionally degrades single-stranded DNA into large acid-insoluble oligonucleotides, which are then degraded further into small acid-soluble oligonucleotides. This Shewanella pealeana (strain ATCC 700345 / ANG-SQ1) protein is Exodeoxyribonuclease 7 large subunit.